A 289-amino-acid chain; its full sequence is Glycine-rich RNA-binding protein 5, mitochondrial (289 aa).

Residues 1 to 31 (MAFLSKVGRLFSQTSSHVTASSSMLQSIRCM) constitute a mitochondrion transit peptide. The 78-residue stretch at 34–111 (SKIFVGGISY…RRIRVNYATE (78 aa)) folds into the RRM domain. The segment at 219 to 289 (QGSSTNAGFD…TDDGDVAKRA (71 aa)) is disordered. The span at 257 to 272 (GSDNQFGDAENGNTEN) shows a compositional bias: polar residues.

Belongs to the GR-RBP family. Homodimer. Interacts with MORF8/RIP1 AND RBG3/ORRM3. Binds to RBG2/ORRM5.

The protein resides in the mitochondrion. Possibly has a role in RNA transcription or processing during stress. Binds RNAs and DNAs sequence with a preference to single-stranded nucleic acids. Displays strong affinity to poly(U) sequence. Involved in C-to-U editing of mitochondrial RNA. Functions as a major mitochondrial editing factor. Controls 44 percent of the mitochondrial editing sites. The protein is Glycine-rich RNA-binding protein 5, mitochondrial of Arabidopsis thaliana (Mouse-ear cress).